Consider the following 206-residue polypeptide: Ras-related protein Ral-B (206 aa).

21-29 (GSGGVGKSA) contacts GTP. An Effector region motif is present at residues 43–51 (YEPTKADSY). Residues 68-72 (DTAGQ), 128-131 (NKSD), and 158-160 (SAK) each bind GTP. The disordered stretch occupies residues 181-206 (MSENKDKNGRKSSKSKKSFKERCCLL). At Cys-203 the chain carries Cysteine methyl ester. The S-geranylgeranyl cysteine moiety is linked to residue Cys-203. The propeptide at 204 to 206 (CLL) is removed in mature form.

The protein belongs to the small GTPase superfamily. Ras family. In terms of assembly, interacts with EXOC2/Sec5 and EXOC8/Exo84. Interacts (via effector domain) with RALBP1. Prenylation is essential for membrane localization. Post-translationally, the farnesylated form confers resistance to the proapoptotic and anti-anchorage-dependent growth effects of some geranylgeranyltransferase I inhibitors.

It is found in the cell membrane. Its subcellular location is the midbody. It catalyses the reaction GTP + H2O = GDP + phosphate + H(+). Alternates between an inactive form bound to GDP and an active form bound to GTP. Activated by a guanine nucleotide-exchange factor (GEF) and inactivated by a GTPase-activating protein (GAP). Multifunctional GTPase involved in a variety of cellular processes including gene expression, cell migration, cell proliferation, oncogenic transformation and membrane trafficking. Accomplishes its multiple functions by interacting with distinct downstream effectors. Acts as a GTP sensor for GTP-dependent exocytosis of dense core vesicles. Required both to stabilize the assembly of the exocyst complex and to localize functional exocyst complexes to the leading edge of migrating cells. Required for suppression of apoptosis. In late stages of cytokinesis, upon completion of the bridge formation between dividing cells, mediates exocyst recruitment to the midbody to drive abscission. Involved in ligand-dependent receptor mediated endocytosis of the EGF and insulin receptors. The chain is Ras-related protein Ral-B (Ralb) from Mus musculus (Mouse).